Consider the following 273-residue polypeptide: MEHIARFFFGVSGNVIALFLFLSPVVTFWRIIKKRSTEDFSGVPYNMTLLNCLLSAWYGLPFVSPNNILVTTINGTGSVIEAIYVVIFLIFAERKARLKMMGLLGLVTSIFTMVVLVSLLALHGQGRKLFCGLAATIFSICMYASPLSIMRLVIKTKSVEFMPFLLSLSVFLCGTSWFIYGLLGRDPFIAIPNGCGSFLGLMQLILYAIYRNHKGATPAAAAGKGDAADEVEDAKKAAAAVEMADAKTNKVVADDADADADGKSADDKVASQV.

Residues 1–6 lie on the Extracellular side of the membrane; it reads MEHIAR. Residues 7-27 form a helical membrane-spanning segment; the sequence is FFFGVSGNVIALFLFLSPVVT. The 89-residue stretch at 7–95 folds into the MtN3/slv 1 domain; the sequence is FFFGVSGNVI…VIFLIFAERK (89 aa). Residues 28 to 42 are Cytoplasmic-facing; the sequence is FWRIIKKRSTEDFSG. The chain crosses the membrane as a helical span at residues 43–63; the sequence is VPYNMTLLNCLLSAWYGLPFV. The Extracellular segment spans residues 64 to 71; that stretch reads SPNNILVT. The chain crosses the membrane as a helical span at residues 72 to 92; it reads TINGTGSVIEAIYVVIFLIFA. The Cytoplasmic portion of the chain corresponds to 93–101; that stretch reads ERKARLKMM. A helical transmembrane segment spans residues 102-122; the sequence is GLLGLVTSIFTMVVLVSLLAL. Topologically, residues 123–128 are extracellular; that stretch reads HGQGRK. The chain crosses the membrane as a helical span at residues 129-149; the sequence is LFCGLAATIFSICMYASPLSI. In terms of domain architecture, MtN3/slv 2 spans 131–214; sequence CGLAATIFSI…ILYAIYRNHK (84 aa). Topologically, residues 150–163 are cytoplasmic; it reads MRLVIKTKSVEFMP. The chain crosses the membrane as a helical span at residues 164-184; the sequence is FLLSLSVFLCGTSWFIYGLLG. Topologically, residues 185-188 are extracellular; the sequence is RDPF. A helical transmembrane segment spans residues 189 to 209; that stretch reads IAIPNGCGSFLGLMQLILYAI. Residues 210–273 are Cytoplasmic-facing; sequence YRNHKGATPA…SADDKVASQV (64 aa).

Belongs to the SWEET sugar transporter family. Forms homooligomers and/or heterooligomers.

It is found in the cell membrane. Functionally, mediates both low-affinity uptake and efflux of sugar across the plasma membrane. This is Bidirectional sugar transporter SWEET1a (SWEET1A) from Oryza sativa subsp. japonica (Rice).